A 157-amino-acid chain; its full sequence is Protein SINE4 (157 aa).

In terms of domain architecture, KASH spans 104-157 (VTSSSDTTKAKKKTTIRRFVSVTMVLLLSWVLVVLMNHFDHLSMNTQIITLVPT). The helical transmembrane segment at 122–142 (FVSVTMVLLLSWVLVVLMNHF) threads the bilayer. The Required for nuclear localization motif lies at 154–157 (LVPT).

As to quaternary structure, interacts with SUN1 and SUN2.

Its subcellular location is the nucleus membrane. This Arabidopsis thaliana (Mouse-ear cress) protein is Protein SINE4.